The sequence spans 241 residues: Pyridoxal phosphate phosphatase PHOSPHO2 (241 aa).

Asp-8 acts as the Nucleophile in catalysis. Mg(2+) contacts are provided by Asp-8 and Asp-10. The active-site Proton donor is the Asp-10. Residues Asp-19 and Asp-99 each coordinate substrate. Asp-179 contacts Mg(2+).

This sequence belongs to the HAD-like hydrolase superfamily. PHOSPHO family. Requires Mg(2+) as cofactor.

The catalysed reaction is pyridoxal 5'-phosphate + H2O = pyridoxal + phosphate. In terms of biological role, phosphatase that has high activity toward pyridoxal 5'-phosphate (PLP). Also active at much lower level toward pyrophosphate, phosphoethanolamine (PEA), phosphocholine (PCho), phospho-l-tyrosine, fructose-6-phosphate, p-nitrophenyl phosphate, and h-glycerophosphate. This chain is Pyridoxal phosphate phosphatase PHOSPHO2 (PHOSPHO2), found in Homo sapiens (Human).